Reading from the N-terminus, the 382-residue chain is Cytoplasmic tRNA 2-thiolation protein 2 (382 aa).

This sequence belongs to the CTU2/NCS2 family.

The protein localises to the cytoplasm. The protein operates within tRNA modification; 5-methoxycarbonylmethyl-2-thiouridine-tRNA biosynthesis. Functionally, plays a central role in 2-thiolation of mcm(5)S(2)U at tRNA wobble positions of tRNA(Lys), tRNA(Glu) and tRNA(Gln). May act by forming a heterodimer with NCS6 that ligates sulfur from thiocarboxylated URM1 onto the uridine of tRNAs at wobble position. Prior mcm(5) tRNA modification by the elongator complex is required for 2-thiolation. May also be involved in protein urmylation. In Phaeosphaeria nodorum (strain SN15 / ATCC MYA-4574 / FGSC 10173) (Glume blotch fungus), this protein is Cytoplasmic tRNA 2-thiolation protein 2.